The following is a 92-amino-acid chain: Putative transition state regulator Abh (92 aa).

Positions 5–50 (GVVRKVDELGRIVMPIELRRALDIAIKDSIEFFVDGDKIILKKYKP) constitute a SpoVT-AbrB domain.

The protein to B.subtilis AbrB and SpoVT.

This Bacillus subtilis (strain 168) protein is Putative transition state regulator Abh (abh).